We begin with the raw amino-acid sequence, 293 residues long: RNA-binding Raly-like protein (293 aa).

One can recognise an RRM domain in the interval 21-92 (SRVFIGNLNT…QPLDINMAGE (72 aa)). Disordered regions lie at residues 159-195 (PRAAVTTTRRGKGVFSMKGGSRSAVSGSSSSGSKLKS) and 245-293 (QDEC…LQIK). Residues 176–192 (KGGSRSAVSGSSSSGSK) show a composition bias toward low complexity. A coiled-coil region spans residues 192 to 254 (KLKSDELQTI…QDECVSENAD (63 aa)). Residues 259–284 (EPAEGAPDADGEELTDGVEEDFDEDG) show a composition bias toward acidic residues.

It belongs to the RRM HNRPC family. RALY subfamily.

This Bos taurus (Bovine) protein is RNA-binding Raly-like protein (RALYL).